Consider the following 361-residue polypeptide: Probable dual-specificity RNA methyltransferase RlmN (361 aa).

Residue Glu-99 is the Proton acceptor of the active site. Residues 105–342 (GPNRMTACVS…VTIRKSYGTP (238 aa)) enclose the Radical SAM core domain. A disulfide bridge connects residues Cys-112 and Cys-347. [4Fe-4S] cluster-binding residues include Cys-119, Cys-123, and Cys-126. Residues 171–172 (GE), Ser-204, 227–229 (SLH), and Asn-304 each bind S-adenosyl-L-methionine. The active-site S-methylcysteine intermediate is the Cys-347.

The protein belongs to the radical SAM superfamily. RlmN family. The cofactor is [4Fe-4S] cluster.

The protein resides in the cytoplasm. The enzyme catalyses adenosine(2503) in 23S rRNA + 2 reduced [2Fe-2S]-[ferredoxin] + 2 S-adenosyl-L-methionine = 2-methyladenosine(2503) in 23S rRNA + 5'-deoxyadenosine + L-methionine + 2 oxidized [2Fe-2S]-[ferredoxin] + S-adenosyl-L-homocysteine. It carries out the reaction adenosine(37) in tRNA + 2 reduced [2Fe-2S]-[ferredoxin] + 2 S-adenosyl-L-methionine = 2-methyladenosine(37) in tRNA + 5'-deoxyadenosine + L-methionine + 2 oxidized [2Fe-2S]-[ferredoxin] + S-adenosyl-L-homocysteine. Functionally, specifically methylates position 2 of adenine 2503 in 23S rRNA and position 2 of adenine 37 in tRNAs. In Chlorobium luteolum (strain DSM 273 / BCRC 81028 / 2530) (Pelodictyon luteolum), this protein is Probable dual-specificity RNA methyltransferase RlmN.